The chain runs to 206 residues: Large ribosomal subunit protein bL17 (206 aa).

The segment covering 130-141 has biased composition (basic and acidic residues); it reads ERARGTRFEARR. The interval 130 to 206 is disordered; the sequence is ERARGTRFEA…SGAGEQNSAN (77 aa). Low complexity-rich tracts occupy residues 160-181 and 189-200; these read TAAA…GAAG and DDSGIGDDSGAG.

It belongs to the bacterial ribosomal protein bL17 family. Part of the 50S ribosomal subunit. Contacts protein L32.

The protein is Large ribosomal subunit protein bL17 of Frankia casuarinae (strain DSM 45818 / CECT 9043 / HFP020203 / CcI3).